A 168-amino-acid polypeptide reads, in one-letter code: Diphosphoinositol polyphosphate phosphohydrolase 1 (168 aa).

N-acetylmethionine is present on methionine 1. Substrate contacts are provided by residues arginine 10, 18 to 20 (KKR), and 39 to 41 (SSR). One can recognise a Nudix hydrolase domain in the interval 17-142 (YKKRAACLCF…KPVQASYFEA (126 aa)). Mg(2+) contacts are provided by glycine 50 and glutamate 66. Positions 51–72 (GGMEPEEEPSVAAVREVCEEAG) match the Nudix box motif. Glutamate 69 (proton acceptor) is an active-site residue. Glutamate 70 contacts Mg(2+). Substrate is bound by residues 89 to 91 (RKH), arginine 115, and lysine 133.

It belongs to the Nudix hydrolase family. DIPP subfamily. As to quaternary structure, monomer. Mg(2+) serves as cofactor. Requires Mn(2+) as cofactor. Zn(2+) is required as a cofactor.

Its subcellular location is the cytoplasm. It localises to the nucleus. The enzyme catalyses diphospho-myo-inositol polyphosphate + H2O = myo-inositol polyphosphate + phosphate.. It carries out the reaction 5-diphospho-1D-myo-inositol 1,2,3,4,6-pentakisphosphate + H2O = 1D-myo-inositol hexakisphosphate + phosphate + H(+). The catalysed reaction is 3,5-bis(diphospho)-1D-myo-inositol 1,2,4,6-tetrakisphosphate + H2O = 3-diphospho-1D-myo-inositol 1,2,4,5,6-pentakisphosphate + phosphate + 2 H(+). It catalyses the reaction [phosphate](n+1) + n H2O = (n+1) phosphate + n H(+). The enzyme catalyses P(1),P(5)-bis(5'-adenosyl) pentaphosphate + H2O = ADP + ATP + 2 H(+). It carries out the reaction P(1),P(6)-bis(5'-adenosyl) hexaphosphate + H2O = 2 ATP + 2 H(+). The catalysed reaction is P(1),P(4)-bis(5'-adenosyl) tetraphosphate + H2O = AMP + ATP + 2 H(+). It catalyses the reaction a 5'-end (N(7)-methyl 5'-triphosphoguanosine)-ribonucleoside in mRNA + H2O = N(7)-methyl-GMP + a 5'-end diphospho-ribonucleoside in mRNA + 2 H(+). The enzyme catalyses a 5'-end (N(7)-methyl 5'-triphosphoguanosine)-ribonucleoside in mRNA + H2O = N(7)-methyl-GDP + a 5'-end phospho-ribonucleoside in mRNA + 2 H(+). Its activity is regulated as follows. Diphosphoinositol polyphosphate phosphohydrolase is inhibited by fluoride and InsP6. Functionally, cleaves a beta-phosphate from the diphosphate groups in PP-InsP5 (diphosphoinositol pentakisphosphate) and [PP]2-InsP4 (bisdiphosphoinositol tetrakisphosphate), suggesting that it may play a role in signal transduction. InsP6 (inositol hexakisphosphate) is not a substrate. Acts as a negative regulator of the ERK1/2 pathway. Also able to catalyze the hydrolysis of dinucleoside oligophosphates, with diadenosine 5',5'''-P1,P6-hexaphosphate (Ap6A) and diadenosine 5',5'''- P1,P5-pentaphosphate (Ap5A) being the preferred substrates. The major reaction products are ADP and p4a from Ap6A and ADP and ATP from Ap5A. Also able to hydrolyze 5- phosphoribose 1-diphosphate. Acts as a decapping enzyme that can hydrolyze both monomethylated and unmethylated capped RNAs. Hydrolyzes monomethylated capped RNA after both the alpha- and beta-phosphates generating m7GMP + ppRNA and m7GDP + pRNA. Modulates the stability of a subset of mRNAs implicated in cell motility. Divalent cations zinc, magnesium and manganese determine its substrate specificity. Exhibits endopolyphosphatase activity in the presence of zinc ions. Exhibits diphosphoinositol polyphosphate phosphohydrolase in the presence of magnesium ions and diadenosine hexaphosphate hydrolase activity in the presence of manganese ions. Plays an important role in limiting DNA damage and maintaining cell survival upon oxidative stress via its endopolyphosphatase activity. The sequence is that of Diphosphoinositol polyphosphate phosphohydrolase 1 from Rattus norvegicus (Rat).